Consider the following 254-residue polypeptide: Ribosomal RNA small subunit methyltransferase J (254 aa).

S-adenosyl-L-methionine-binding positions include 107–108 (RD), 123–124 (ER), and Asp177.

It belongs to the methyltransferase superfamily. RsmJ family.

The protein localises to the cytoplasm. The enzyme catalyses guanosine(1516) in 16S rRNA + S-adenosyl-L-methionine = N(2)-methylguanosine(1516) in 16S rRNA + S-adenosyl-L-homocysteine + H(+). Its function is as follows. Specifically methylates the guanosine in position 1516 of 16S rRNA. The chain is Ribosomal RNA small subunit methyltransferase J from Histophilus somni (strain 129Pt) (Haemophilus somnus).